A 185-amino-acid polypeptide reads, in one-letter code: Deoxyuridine 5'-triphosphate nucleotidohydrolase (185 aa).

A disordered region spans residues 1-23 (MSHLQAHMQRNNKESHSLSPFSQ). Substrate is bound by residues 95-97 (RSG), Asn-108, 112-114 (TID), and Lys-122. The interval 160-185 (DQKDSSQTPSNEGSRGADGFGSTGHD) is disordered. Residues 175–185 (GADGFGSTGHD) show a composition bias toward gly residues.

This sequence belongs to the dUTPase family. Requires Mg(2+) as cofactor.

The enzyme catalyses dUTP + H2O = dUMP + diphosphate + H(+). It participates in pyrimidine metabolism; dUMP biosynthesis; dUMP from dCTP (dUTP route): step 2/2. In terms of biological role, this enzyme is involved in nucleotide metabolism: it produces dUMP, the immediate precursor of thymidine nucleotides and it decreases the intracellular concentration of dUTP so that uracil cannot be incorporated into DNA. This is Deoxyuridine 5'-triphosphate nucleotidohydrolase from Bartonella quintana (strain Toulouse) (Rochalimaea quintana).